The sequence spans 393 residues: UDP-N-acetylglucosamine--N-acetylmuramyl-(pentapeptide) pyrophosphoryl-undecaprenol N-acetylglucosamine transferase (393 aa).

Residues 15 to 17 (TAG), asparagine 129, arginine 171, serine 211, and glutamine 322 each bind UDP-N-acetyl-alpha-D-glucosamine.

This sequence belongs to the glycosyltransferase 28 family. MurG subfamily.

The protein resides in the cell membrane. It catalyses the reaction di-trans,octa-cis-undecaprenyl diphospho-N-acetyl-alpha-D-muramoyl-L-alanyl-D-glutamyl-meso-2,6-diaminopimeloyl-D-alanyl-D-alanine + UDP-N-acetyl-alpha-D-glucosamine = di-trans,octa-cis-undecaprenyl diphospho-[N-acetyl-alpha-D-glucosaminyl-(1-&gt;4)]-N-acetyl-alpha-D-muramoyl-L-alanyl-D-glutamyl-meso-2,6-diaminopimeloyl-D-alanyl-D-alanine + UDP + H(+). It participates in cell wall biogenesis; peptidoglycan biosynthesis. Cell wall formation. Catalyzes the transfer of a GlcNAc subunit on undecaprenyl-pyrophosphoryl-MurNAc-pentapeptide (lipid intermediate I) to form undecaprenyl-pyrophosphoryl-MurNAc-(pentapeptide)GlcNAc (lipid intermediate II). The polypeptide is UDP-N-acetylglucosamine--N-acetylmuramyl-(pentapeptide) pyrophosphoryl-undecaprenol N-acetylglucosamine transferase (Bifidobacterium longum (strain DJO10A)).